A 497-amino-acid polypeptide reads, in one-letter code: Vacuolar-processing enzyme beta-isozyme 1 (497 aa).

An N-terminal signal peptide occupies residues 1 to 23; the sequence is MAARCWVWGFVVALLAVAAAADG. Asn153 is a glycosylation site (N-linked (GlcNAc...) asparagine). His180 is a catalytic residue. The Nucleophile role is filled by Cys222. Cys255 and Cys269 form a disulfide bridge. Asn340 carries N-linked (GlcNAc...) asparagine glycosylation. Cystine bridges form between Cys432–Cys462 and Cys444–Cys479.

This sequence belongs to the peptidase C13 family. In terms of processing, auto-catalytic activation. In terms of tissue distribution, expressed in developing seeds.

The protein localises to the protein storage vacuole. The catalysed reaction is Hydrolysis of proteins and small molecule substrates at -Asn-|-Xaa- bonds.. Asparagine-specific endopeptidase that may be involved in processing of proteins targeted to vacuoles. Cysteine protease required for post-translational proteolysis of seed storage proteins in the protein storage vacuole (PSV) of developing seeds, by processing of proglutelin precursor to mature glutelin subunits, thus contributing to the formation of protein crystalline structures in PSV. The protein is Vacuolar-processing enzyme beta-isozyme 1 of Oryza sativa subsp. japonica (Rice).